Here is a 58-residue protein sequence, read N- to C-terminus: Small ribosomal subunit protein bS21 (58 aa).

Over residues 32–42 the composition is skewed to basic and acidic residues; the sequence is ARRREHYEKPS. A disordered region spans residues 32–58; the sequence is ARRREHYEKPSVRRKKKSEAARKRRWH. Residues 43 to 58 are compositionally biased toward basic residues; it reads VRRKKKSEAARKRRWH.

The protein belongs to the bacterial ribosomal protein bS21 family.

In Moorella thermoacetica (strain ATCC 39073 / JCM 9320), this protein is Small ribosomal subunit protein bS21.